Consider the following 239-residue polypeptide: Purine nucleoside phosphorylase DeoD-type (239 aa).

Residue histidine 5 participates in a purine D-ribonucleoside binding. Residues glycine 21, arginine 25, arginine 44, and 88–91 (RVGS) each bind phosphate. A purine D-ribonucleoside contacts are provided by residues 180–182 (EME) and 204–205 (SD). Catalysis depends on aspartate 205, which acts as the Proton donor.

This sequence belongs to the PNP/UDP phosphorylase family. As to quaternary structure, homohexamer; trimer of homodimers.

The enzyme catalyses a purine D-ribonucleoside + phosphate = a purine nucleobase + alpha-D-ribose 1-phosphate. The catalysed reaction is a purine 2'-deoxy-D-ribonucleoside + phosphate = a purine nucleobase + 2-deoxy-alpha-D-ribose 1-phosphate. Functionally, catalyzes the reversible phosphorolytic breakdown of the N-glycosidic bond in the beta-(deoxy)ribonucleoside molecules, with the formation of the corresponding free purine bases and pentose-1-phosphate. The sequence is that of Purine nucleoside phosphorylase DeoD-type from Salmonella choleraesuis (strain SC-B67).